A 346-amino-acid chain; its full sequence is uncharacterized protein (346 aa).

Helical transmembrane passes span 15-35, 55-75, 93-113, 139-159, 182-202, 229-249, 269-289, and 295-315; these read YLRG…LLTV, VEAR…YLFI, ILVL…EALT, ILLL…PLIL, IFTF…YCYV, LGVA…LLLL, LTNY…FHLF, and LQSL…SAMW.

This sequence to E.coli YeiB, B.subtilis YxaH and B.subtilis YrkO.

It localises to the cell membrane. In terms of biological role, involved in transport. This is an uncharacterized protein from Bacillus acidopullulyticus.